We begin with the raw amino-acid sequence, 277 residues long: MLVDELGVKIVHAQHVPAPYLVQRMREIHERDENRQRHAQVDVQRRRDQPERGQHQHRRNRDADHHPDGRTLAGQIVAHPVSHRVRQPRPVAIADVLPRVGPRADCVVAHSLQGSPRRRERRRGQTAHQRLGRRSGNAIACPLYLENAAGPEPDTKRAEGRRFGAFGGGDLRWMADRVPRQGSGRRGLGSRSGAGVPQGADARGWRHTADGVPRVGQPAIRRGVPGFWCWLDHVLTGFGGRNAICAIEDGVEPRVAWWALCTDFDVPRSMGRRTPGG.

A compositionally biased stretch (basic and acidic residues) spans R31–Q54. 3 disordered regions span residues R31–R70, Q113–R133, and R180–D210. Basic residues predominate over residues P116–R133.

In terms of assembly, interacts with Rv2743c.

Functionally, involved in preservation of envelope integrity and tolerance to surface stress. Reverses the inhibitory effect of PspA on ClgR activity. Facilitates intracellular growth of M.tuberculosis. The polypeptide is Putative envelope-preserving system protein Rv2742c (Mycobacterium tuberculosis (strain ATCC 25618 / H37Rv)).